The sequence spans 582 residues: MESCWLTMESYQAALVVCIVSGLILAVAGYGNVRRLACEFLLKPPKRFRDDICEALLRGPENDQKPVLVDFGWRHGAVRRQMLLASAKASAYSNERHGSKIHISPDDIARGRSFADALDVHRRSGRILFGFFHPFCNAGGGGEKVLWKAVETTLKQSLNNIVVVYTGDCDTTGARILSNVEHRFGSQLDSERIVFIFLRHRKWVESRTWPRMTLLGQALGSIVLSIEAALCCPPDVWCDTMGYPFGYPFVSWLCRIPIITYTHYPVVSIDMLDKLRMMPEFRNSPTLWAKFLYWRIFMRCYTFAGSFVDLAVTNSTWTYNHINAIWSRTGNVSIIYPPCSTENLVIENAHDMWDRKHQAVVIAQFRPEKRHALILRSFSNFVKKTGSNMKLLMLGSTRGQEDRDYVKKLEQLAYSELAIPKESLEFITDCKYEKMKKYLQESSFGINAMWNEHFGIAVVEYAASGLITLAHASAGPLLDIIVPWDIEGDKQLERGSDKNRTGFFFKDRSDPDFCKITAEFPTLEELFVRADQLTDEERLAISQRAKRCVLHKFSDLKFSEDWAQVVDRTIQLLHTLRNDKVE.

Residues 1–12 (MESCWLTMESYQ) lie on the Lumenal side of the membrane. Residues 13–33 (AALVVCIVSGLILAVAGYGNV) form a helical membrane-spanning segment. Residues 34 to 240 (RRLACEFLLK…CCPPDVWCDT (207 aa)) lie on the Cytoplasmic side of the membrane. The helical intramembrane region spans 241-261 (MGYPFGYPFVSWLCRIPIITY). The Cytoplasmic portion of the chain corresponds to 262–461 (THYPVVSIDM…EHFGIAVVEY (200 aa)). Residues 462–482 (AASGLITLAHASAGPLLDIIV) constitute an intramembrane region (helical). Over 483–582 (PWDIEGDKQL…LHTLRNDKVE (100 aa)) the chain is Cytoplasmic.

This sequence belongs to the glycosyltransferase group 1 family.

It localises to the endoplasmic reticulum membrane. The enzyme catalyses an alpha-D-Man-(1-&gt;3)-[alpha-D-Man-(1-&gt;6)]-beta-D-Man-(1-&gt;4)-beta-D-GlcNAc-(1-&gt;4)-alpha-D-GlcNAc-diphospho-di-trans,poly-cis-dolichol + 2 GDP-alpha-D-mannose = an alpha-D-Man-(1-&gt;2)-alpha-D-Man-(1-&gt;2)-alpha-D-Man-(1-&gt;3)-[alpha-D-Man-(1-&gt;6)]-beta-D-Man-(1-&gt;4)-beta-D-GlcNAc-(1-&gt;4)-alpha-D-GlcNAc-diphospho-di-trans,poly-cis-dolichol + 2 GDP + 2 H(+). Its pathway is protein modification; protein glycosylation. Functionally, GDP-Man:Man(3)GlcNAc(2)-PP-Dol alpha-1,2-mannosyltransferase that operates in the biosynthetic pathway of dolichol-linked oligosaccharides, the glycan precursors employed in protein asparagine (N)-glycosylation. The assembly of dolichol-linked oligosaccharides begins on the cytosolic side of the endoplasmic reticulum membrane and finishes in its lumen. The sequential addition of sugars to dolichol pyrophosphate produces dolichol-linked oligosaccharides containing fourteen sugars, including two GlcNAcs, nine mannoses and three glucoses. Once assembled, the oligosaccharide is transferred from the lipid to nascent proteins by oligosaccharyltransferases. Catalyzes, on the cytoplasmic face of the endoplasmic reticulum, the addition of the fourth and fifth mannose residues to the dolichol-linked oligosaccharide chain, to produce Man(5)GlcNAc(2)-PP-dolichol core oligosaccharide. This chain is GDP-Man:Man(3)GlcNAc(2)-PP-Dol alpha-1,2-mannosyltransferase (ALG11), found in Eremothecium gossypii (strain ATCC 10895 / CBS 109.51 / FGSC 9923 / NRRL Y-1056) (Yeast).